Here is an 89-residue protein sequence, read N- to C-terminus: Probable Fe(2+)-trafficking protein (89 aa).

This sequence belongs to the Fe(2+)-trafficking protein family.

In terms of biological role, could be a mediator in iron transactions between iron acquisition and iron-requiring processes, such as synthesis and/or repair of Fe-S clusters in biosynthetic enzymes. This chain is Probable Fe(2+)-trafficking protein, found in Legionella pneumophila (strain Paris).